The sequence spans 152 residues: Ribosome maturation factor RimP (152 aa).

The protein belongs to the RimP family.

The protein resides in the cytoplasm. Required for maturation of 30S ribosomal subunits. This chain is Ribosome maturation factor RimP, found in Erwinia tasmaniensis (strain DSM 17950 / CFBP 7177 / CIP 109463 / NCPPB 4357 / Et1/99).